The sequence spans 650 residues: MLLSKLSILLAKWLSVAVYAGTLVHDEQFIPDHILRVSVAQVPSACENREDVVVNGTSPGPAIHLLPGARTWIRVYNDMNDRNLSMHWHGLSQRFAPFSDGTPSATQWPIPPGHFFDYEILTEPEDAGTYFYHSHVGMQALSCTGPLIVEDCGSSPYHYDDERILLFQDHFQKSDLEMIQGLTSTQFTWTGETRGILLNGRGVSPNQAAVQGRPGEASGFFGSHRFSNFRAGDGTSNSWDGIRGDDQIEPPTDCTLPVIDVEPGKTYRLRFIGATGLSLLTMGFEDHNDLTIVQVDGSEYNAPVTVDHIQLGGGQRFDVLLRTKTAEELRCNGDKTTYFLQFETRDRPDPYRGYGVLRYNLGTPVPAAPTTPALTLPAEVNNWLEYTFQPLHPSSSLSPTAEEVTRRVILEAEQKIDPATGRLVWKLAHMTWTDMSRDKPVLVDIYERGEAAMPDYAAALTNYGWDPATKLFPAKKDEVLEIVIQNTGSHYSGASGIVETHPFHAHGQHFYDVGSGPGKYDPEANNAKLASLGYRPIKRDTTMVYRYGEGKVAPGEPAGWRAWRMKMNNPGVWMVHCHILAHMIMGMETIWVVGDAEDIVTIPLSVSQNYFTYGGSVYGNDTHAPEVYHYFDDTNKCCAAGAGDSEDSGH.

A signal peptide spans 1 to 20 (MLLSKLSILLAKWLSVAVYA). 3 consecutive Plastocyanin-like domains span residues 41–151 (QVPS…IVED), 162–360 (ERIL…LRYN), and 439–595 (KPVL…VVGD). Cysteine 46 and cysteine 254 are disulfide-bonded. N-linked (GlcNAc...) asparagine glycans are attached at residues asparagine 55 and asparagine 83. Residues histidine 87, histidine 89, histidine 133, and histidine 135 each contribute to the Cu cation site. Positions 501, 504, 506, 576, 577, 578, and 582 each coordinate Cu cation. An N-linked (GlcNAc...) asparagine glycan is attached at asparagine 620.

Belongs to the multicopper oxidase family. Monomer. In terms of processing, N-glycosylation Asn-55 and Asn-83 is involved in folding, conformational stability and laccase activity.

The catalysed reaction is 2 2',3,4-trihydroxy-trans-chalcone + O2 + 2 H(+) = 2 3',4'-dihydroxyaurone + 2 H2O. Retains almost half of its activity in presence of high salt concentrations up to 100 mM NaCl. Retains also more than 85% of its original activity in the presence of 1 mM EDTA, indicating a satisfactory resistance towards chelators, which is rare among metal-containing enzyme. The activity drops significantly in the presence of NaN(3) or SDS. Appears more active in the presence of methanol compared to ethanol, but acetone or DMSO addition severely affect remaining laccase activity. Yellow laccase-like multicopper oxidase that is able to oxidize a variety of phenolic compounds including standard laccase substrates such as 2'-azino-bis(3-ethylbenzothiazoline-6-sulphonic acid) (ABTS) and 2,6-dimethoxyphenol (2,6-DMP). The existence of an ortho-hydroxy group is crucial for oxidation since pyrogallol and catechol, which contain ortho-hydroxy groups, are readily oxidized, which is not the case for resorcinol and hydroquinone, that contain meta- and para-hydroxy groups, respectively. The same is also true for the existence of a methoxy group in an ortho-position, since 2,6-DMP, guaiacol and ferulic and caffeic acids are also rather easily oxidized compared with the corresponding unsubstituted compound. Can be used for the bioconversion of 2',3,4-trihy-droxychalcone to 3',4'-dihydroxy-aurone, a bioactive aurone recently shown to possess inhibitory activity against several isoforms of the histone deacetylase complex (HDAC). The chain is Laccase-like multicopper oxidase 1 from Thermothelomyces thermophilus (strain ATCC 42464 / BCRC 31852 / DSM 1799) (Sporotrichum thermophile).